Consider the following 231-residue polypeptide: Endonuclease NucS (231 aa).

The protein belongs to the NucS endonuclease family.

It is found in the cytoplasm. Functionally, cleaves both 3' and 5' ssDNA extremities of branched DNA structures. The chain is Endonuclease NucS from Beutenbergia cavernae (strain ATCC BAA-8 / DSM 12333 / CCUG 43141 / JCM 11478 / NBRC 16432 / NCIMB 13614 / HKI 0122).